We begin with the raw amino-acid sequence, 1074 residues long: Topoisomerase 1-associated factor 1 (1074 aa).

2 disordered regions span residues 572 to 595 (NTHK…QRKI) and 936 to 1074 (EEPP…DRET). Basic residues-rich tracts occupy residues 948–962 (LLRR…RRRS) and 978–991 (GHQH…KRAK). Over residues 1014-1031 (EATRRFFENEERLRREMD) the composition is skewed to basic and acidic residues. Positions 1046–1055 (VKRKRGKKNG) are enriched in basic residues.

The protein belongs to the timeless family.

The protein resides in the nucleus. Functionally, involved in chromosome segregation during meiosis and DNA damage repair. The chain is Topoisomerase 1-associated factor 1 (TOF1) from Cryptococcus neoformans var. neoformans serotype D (strain B-3501A) (Filobasidiella neoformans).